We begin with the raw amino-acid sequence, 391 residues long: Phosphoprotein (391 aa).

Residues T10 and T16 each carry the phosphothreonine modification. Residues 54–65 (QKNIQHPTASHQ) show a composition bias toward polar residues. Disordered stretches follow at residues 54-97 (QKNI…PEPL) and 148-185 (PVTEFKRGGPGAAAQGQTIQEEGIDGNGASAGSKERSG). S69 carries the post-translational modification Phosphoserine. A phosphothreonine mark is found at T91, T150, and T165. A Phosphoserine modification is found at S188. Residues 216–279 (ISANEIMDLL…MATVKIMDPG (64 aa)) form a multimerization region. The stretch at 218–245 (ANEIMDLLRGMDARLQHLEQKVDKVLAQ) forms a coiled coil. Residue T250 is modified to Phosphothreonine. S257 carries the post-translational modification Phosphoserine. Phosphothreonine occurs at positions 258 and 282. Phosphoserine occurs at positions 292 and 294. A Phosphothreonine modification is found at T298. 2 positions are modified to phosphoserine: S301 and S374. The interaction with the nucleoprotein stretch occupies residues 343-391 (AGRKVMITKMITDCVANPQMKQAFEQRLAKASTEDALNDIKRDIIRSAI). Residue T375 is modified to Phosphothreonine.

It belongs to the rubulavirus/avulavirus P protein family. As to quaternary structure, homotetramer. Interacts (via multimerization domain) with polymerase L; this interaction forms the polymerase L-P complex. Interacts (via N-terminus) with N0 (via Ncore); this interaction allows P to chaperon N0 to avoid N polymerization before encapsidation. Interacts (via C-terminus) with N-RNA template; this interaction positions the polymerase on the template for both transcription and replication. Interacts with host RPS6KB1 kinase; this interaction may play a role in the viral replication and transcription.

Essential cofactor of the RNA polymerase L that plays a central role in the transcription and replication by forming the polymerase complex with RNA polymerase L and recruiting L to the genomic N-RNA template for RNA synthesis. Also plays a central role in the encapsidation of nascent RNA chains by forming the encapsidation complex with the nucleocapsid protein N (N-P complex). Acts as a chaperone for newly synthesized free N protein, so-called N0, allowing encapsidation of nascent RNA chains during replication. The nucleoprotein protein N prevents excessive phosphorylation of P, which leads to down-regulation of viral transcription/ replication. Participates, together with N, in the formation of viral factories (viroplasms), which are large inclusions in the host cytoplasm where replication takes place. The chain is Phosphoprotein (P/V) from Homo sapiens (Human).